The primary structure comprises 242 residues: Ribosomal RNA small subunit methyltransferase G (242 aa).

S-adenosyl-L-methionine-binding positions include Gly-78, Phe-83, 129 to 130 (AE), and Arg-148.

It belongs to the methyltransferase superfamily. RNA methyltransferase RsmG family.

Its subcellular location is the cytoplasm. Its function is as follows. Specifically methylates the N7 position of a guanine in 16S rRNA. In Lachnoclostridium phytofermentans (strain ATCC 700394 / DSM 18823 / ISDg) (Clostridium phytofermentans), this protein is Ribosomal RNA small subunit methyltransferase G.